The sequence spans 538 residues: Calcyphosin-2 (538 aa).

The span at Arg-134–Lys-146 shows a compositional bias: polar residues. The interval Arg-134–Asp-154 is disordered. EF-hand domains follow at residues Arg-426–Glu-461, Val-462–Glu-497, and Tyr-498–Ser-533. Ca(2+) is bound by residues Asp-439, Asn-443, Asp-450, Asn-477, Asn-479, Lys-481, Glu-486, Asp-511, Asn-513, Ser-515, Ser-517, and Asn-522.

In terms of tissue distribution, abundantly expressed in many tissues. Expressed in brain, colon, heart, kidney, liver, lung, liver, pancreas, placenta, skeletal muscle, testis and thymus. Highest expression in colon, testis, lung, placenta and brain.

This chain is Calcyphosin-2, found in Homo sapiens (Human).